A 316-amino-acid chain; its full sequence is Cyclin-dependent kinase inhibitor 1C (316 aa).

Arg107 is modified (omega-N-methylarginine). The interval 124 to 153 (ESLDGLEEAPEQLPSVPVPAPASTPPPVPV) is disordered. The span at 139–153 (VPVPAPASTPPPVPV) shows a compositional bias: pro residues. 9 repeat units span residues 156–159 (PAPA), 160–163 (PAPA), 180–183 (PAPA), 184–187 (PAPA), 188–191 (PAPA), 198–201 (PAPA), 202–205 (PAPA), 206–209 (PAPA), and 210–213 (PAPA). The interval 156-213 (PAPAPAPAPVAAPVAAPVAVAVLAPAPAPAPAPAPAPAPVAAPAPAPAPAPAPAPAPA) is 9 X 4 AA repeats of P-A-P-A. Pro residues predominate over residues 181 to 217 (APAPAPAPAPAPAPVAAPAPAPAPAPAPAPAPAPAPD). A disordered region spans residues 181-260 (APAPAPAPAP…AAGTAAASAN (80 aa)). The segment covering 223–233 (SAEQGANQGQR) has biased composition (polar residues). Residues 251-260 (AAGTAAASAN) show a composition bias toward low complexity. Position 268 is a phosphoserine (Ser268). The short motif at 278–281 (KRKR) is the Nuclear localization signal element. Residues 278 to 316 (KRKRSAPEKSSGDVPAPCPSPSAAPGVGSVEQTPRKRLR) are disordered.

The protein belongs to the CDI family. Interacts with PCNA. In terms of tissue distribution, expressed in the heart, brain, lung, skeletal muscle, kidney, pancreas and testis. Expressed in the eye. High levels are seen in the placenta while low levels are seen in the liver.

It localises to the nucleus. Functionally, potent tight-binding inhibitor of several G1 cyclin/CDK complexes (cyclin E-CDK2, cyclin D2-CDK4, and cyclin A-CDK2) and, to lesser extent, of the mitotic cyclin B-CDC2. Negative regulator of cell proliferation. May play a role in maintenance of the non-proliferative state throughout life. In Homo sapiens (Human), this protein is Cyclin-dependent kinase inhibitor 1C (CDKN1C).